The chain runs to 114 residues: Tail hub protein B (114 aa).

In terms of assembly, heterotrimer with THA. The heterotrimers further assemble as 12 docking hubs that anchor the trimeric tail fibers.

It is found in the virion. Functionally, forms the tail hub together with tail hub protein A (THA). In Bacteroides intestinalis (Bacteroides phage PhiCrAss001), this protein is Tail hub protein B.